The chain runs to 159 residues: uncharacterized protein (159 aa).

Residues 4–24 (QIALILSLIILIFFIYKFAMF) traverse the membrane as a helical segment.

It is found in the membrane. This is an uncharacterized protein from Acheta domesticus (House cricket).